Consider the following 464-residue polypeptide: Soluble pyridine nucleotide transhydrogenase (464 aa).

35–44 (DSRRQVGGNC) contacts FAD.

This sequence belongs to the class-I pyridine nucleotide-disulfide oxidoreductase family. FAD serves as cofactor.

The protein localises to the cytoplasm. The catalysed reaction is NAD(+) + NADPH = NADH + NADP(+). In terms of biological role, conversion of NADPH, generated by peripheral catabolic pathways, to NADH, which can enter the respiratory chain for energy generation. The polypeptide is Soluble pyridine nucleotide transhydrogenase (Pseudomonas savastanoi pv. phaseolicola (strain 1448A / Race 6) (Pseudomonas syringae pv. phaseolicola (strain 1448A / Race 6))).